We begin with the raw amino-acid sequence, 644 residues long: MVIVASSNMLRPDRIWLCGKYQTARTLYVVGNKSKRRNPSLEDWARSDSDRKMKLQQQEYNRKLKELKNLTANVSKMISKKSEKEVERSQIQSTEPSPETSTQLTQKNDSQRLDFLAKKSLFIPVVDIPASVSDRIGLAFKYLVSKSSQNWSMVLDQLEKNGGFKDIPSKDIRKFVYQIPKPHIPPIISRLKKMHHDAGVPVSPKLVNVFIDSLLLSPSIPSSVMSQIESYCDSIRSTSKKGRLPRETYELLIRAYGKNSNLEMVNSILTEMKQVGLQPSKNTFENILATSVYKSKDHKQAVEVFDTMKFLSDKTKPAERAYRDIIVSYVNNDDIEKALDLYNEMVENKVEVSQQIMVALARGCISRPELKVKAWEFIFEIYNQKWEPTIQTLEYVLYLAAKDGDVALCRALVNKLSETSSVTVRSFSFLLLGYSKSSLYNESPSIPPILAHENGIRFRRNILADSSYAPSSESSLPFLPVLDLVTEKEILAESSAMWAYANTIRPDLINIESANTYLNIGAKFGSLKEFLDRYNSATLLDRQGVPDTRVIEDENLAEVSVMDYTSTASVRSPLLDRNHTLKVPRDDMTYLIALKAASKARNYEFSQEVWSERGLYRKSDRIRLSQEQKRTNLIFNLQSLWSQL.

A mitochondrion-targeting transit peptide spans 1–38; that stretch reads MVIVASSNMLRPDRIWLCGKYQTARTLYVVGNKSKRRN. The interval 78 to 108 is disordered; the sequence is ISKKSEKEVERSQIQSTEPSPETSTQLTQKN. The span at 89–108 shows a compositional bias: polar residues; the sequence is SQIQSTEPSPETSTQLTQKN. PPR repeat units lie at residues 245–279, 280–315, and 318–352; these read PRET…GLQP, SKNT…SDKT, and AERA…KVEV.

Belongs to the CCM1 family. Binds to mitochondrial small subunit 15S rRNA.

It is found in the mitochondrion. Regulates mitochondrial small subunit maturation by controlling 15S rRNA 5'-end processing. Localizes to the 5' precursor of the 15S rRNA in a position that is subsequently occupied by mS47 in the mature yeast mtSSU. Uses structure and sequence-specific RNA recognition, binding to a single-stranded region of the precursor and specifically recognizing bases -6 to -1. The exchange of Ccm1 for mS47 is coupled to the irreversible removal of precursor rRNA that is accompanied by conformational changes of the mitoribosomal proteins uS5m and mS26. These conformational changes signal completion of 5'-end rRNA processing through protection of the mature 5'-end of the 15S rRNA and stabilization of mS47. The removal of the 5' precursor together with the dissociation of Ccm1 may be catalyzed by the 5'-3' exoribonuclease Pet127. Involved in the specific removal of group I introns in mitochondrial encoded transcripts. The protein is Mitochondrial 15S rRNA processing factor CCM1 (CCM1) of Meyerozyma guilliermondii (strain ATCC 6260 / CBS 566 / DSM 6381 / JCM 1539 / NBRC 10279 / NRRL Y-324) (Yeast).